A 503-amino-acid chain; its full sequence is Aspartyl/glutamyl-tRNA(Asn/Gln) amidotransferase subunit B (503 aa).

The protein belongs to the GatB/GatE family. GatB subfamily. Heterotrimer of A, B and C subunits.

It catalyses the reaction L-glutamyl-tRNA(Gln) + L-glutamine + ATP + H2O = L-glutaminyl-tRNA(Gln) + L-glutamate + ADP + phosphate + H(+). The catalysed reaction is L-aspartyl-tRNA(Asn) + L-glutamine + ATP + H2O = L-asparaginyl-tRNA(Asn) + L-glutamate + ADP + phosphate + 2 H(+). In terms of biological role, allows the formation of correctly charged Asn-tRNA(Asn) or Gln-tRNA(Gln) through the transamidation of misacylated Asp-tRNA(Asn) or Glu-tRNA(Gln) in organisms which lack either or both of asparaginyl-tRNA or glutaminyl-tRNA synthetases. The reaction takes place in the presence of glutamine and ATP through an activated phospho-Asp-tRNA(Asn) or phospho-Glu-tRNA(Gln). The chain is Aspartyl/glutamyl-tRNA(Asn/Gln) amidotransferase subunit B from Ruegeria pomeroyi (strain ATCC 700808 / DSM 15171 / DSS-3) (Silicibacter pomeroyi).